Here is a 354-residue protein sequence, read N- to C-terminus: Phenylalanine--tRNA ligase alpha subunit (354 aa).

Glutamate 279 is a binding site for Mg(2+).

The protein belongs to the class-II aminoacyl-tRNA synthetase family. Phe-tRNA synthetase alpha subunit type 1 subfamily. In terms of assembly, tetramer of two alpha and two beta subunits. It depends on Mg(2+) as a cofactor.

The protein resides in the cytoplasm. It carries out the reaction tRNA(Phe) + L-phenylalanine + ATP = L-phenylalanyl-tRNA(Phe) + AMP + diphosphate + H(+). The sequence is that of Phenylalanine--tRNA ligase alpha subunit from Cupriavidus pinatubonensis (strain JMP 134 / LMG 1197) (Cupriavidus necator (strain JMP 134)).